The primary structure comprises 623 residues: Xaa-Pro aminopeptidase 1 (623 aa).

Arginine 77 provides a ligand contact to a peptide. At lysine 304 the chain carries N6-acetyllysine. Residue histidine 395 participates in a peptide binding. Mn(2+)-binding residues include aspartate 415, aspartate 426, and histidine 489. Residues histidine 489, histidine 498, and glutamate 523 each contribute to the a peptide site. Glutamate 523 and glutamate 537 together coordinate Mn(2+).

Belongs to the peptidase M24B family. As to quaternary structure, homodimer. It depends on Mn(2+) as a cofactor.

It is found in the cytoplasm. The protein resides in the cytosol. It catalyses the reaction Release of any N-terminal amino acid, including proline, that is linked to proline, even from a dipeptide or tripeptide.. Functionally, metalloaminopeptidase that catalyzes the removal of a penultimate prolyl residue from the N-termini of peptides, such as Arg-Pro-Pro. Contributes to the degradation of bradykinin. The protein is Xaa-Pro aminopeptidase 1 (XPNPEP1) of Bos taurus (Bovine).